A 126-amino-acid polypeptide reads, in one-letter code: Glycine cleavage system H protein (126 aa).

The Lipoyl-binding domain occupies 22–104; that stretch reads IAYVGITDYA…YGKGWLIKIK (83 aa). An N6-lipoyllysine modification is found at lysine 63.

It belongs to the GcvH family. As to quaternary structure, the glycine cleavage system is composed of four proteins: P, T, L and H. It depends on (R)-lipoate as a cofactor.

Its function is as follows. The glycine cleavage system catalyzes the degradation of glycine. The H protein shuttles the methylamine group of glycine from the P protein to the T protein. In Phocaeicola vulgatus (strain ATCC 8482 / DSM 1447 / JCM 5826 / CCUG 4940 / NBRC 14291 / NCTC 11154) (Bacteroides vulgatus), this protein is Glycine cleavage system H protein.